The sequence spans 90 residues: ATP synthase subunit e, mitochondrial (90 aa).

S2 carries the N-acetylserine modification. Residues 7–23 (VLRWSALGAGVVYGFVH) form a helical membrane-spanning segment.

F-type ATP synthases have 2 components, the catalytic core F(1) and the membrane-embedded component F(0), linked together by a central stalk and a peripheral stalk. The central stalk, also called rotor shaft, is often seen as part of F(1). The peripheral stalk is seen as part of F(0). F(0) contains the membrane channel next to the rotor. F-type ATP synthases form dimers but each monomer functions independently in ATP generation. The dimer consists of 17 different polypeptides: ATP1 (subunit alpha, 3 molecules per monomer, part of F(1)), ATP2 (subunit beta, 3 copies per monomer, part of F(1)), ATP3 (subunit gamma, part of the central stalk), ATP4 (subunit b, part of the peripheral stalk), ATP5/OSCP (subunit 5/OSCP, part of the peripheral stalk), ATP6 (subunit a, part of the peripheral stalk), ATP7 (subunit d, part of the peripheral stalk), ATP8 (subunit 8, part of the peripheral stalk), OLI1 (subunit c, part of the rotor, 10 molecules per monomer), ATP14 (subunit h, part of the peripheral stalk), ATP15 (subunit epsilon, part of the central stalk), ATP16 (subunit delta, part of the central stalk), ATP17 (subunit f, part of the peripheral stalk), ATP18 (subunit i/j, part of the peripheral stalk), ATP19 (subunit k, dimer-specific, at interface between monomers), ATP20 (subunit g, at interface between monomers), TIM11 (subunit e, at interface between monomers).

The protein resides in the mitochondrion inner membrane. Functionally, mitochondrial membrane ATP synthase (F(1)F(0) ATP synthase or Complex V) produces ATP from ADP in the presence of a proton gradient across the membrane which is generated by electron transport complexes of the respiratory chain. F-type ATP synthases consist of two structural domains, F(1) - containing the extramembraneous catalytic core, and F(0) - containing the membrane proton channel, linked together by a central stalk and a peripheral stalk. During catalysis, ATP synthesis in the catalytic domain of F(1) is coupled via a rotary mechanism of the central stalk subunits to proton translocation. Part of the complex F(0) domain. Minor subunit located with subunit a/ATP6 in the membrane. Together with subunit g/ATP20, probably contributes to membrane curvature at the site of the ATP synthase dimer, ultimately contributing to formation of cristae. This Yarrowia lipolytica (strain CLIB 122 / E 150) (Yeast) protein is ATP synthase subunit e, mitochondrial.